A 1021-amino-acid chain; its full sequence is Ras-related protein Rab-44 (1021 aa).

Residues 1–40 are disordered; sequence METGQRTSRKVRKLGSNRRRQTREPADGEGAAVAPEPESW. A compositionally biased stretch (basic residues) spans 7–21; it reads TSRKVRKLGSNRRRQ. Positions 77–112 constitute an EF-hand domain; that stretch reads GSKEESEMIFDWVDVERKGHLSLEEFSSGLKNIFGS. The segment at 113–133 is disordered; the sequence is SQSPHRLRRRKPLPSKRVSAT. The segment covering 117–126 has biased composition (basic residues); that stretch reads HRLRRRKPLP. Residues 191 to 315 are a coiled coil; it reads LAKMTSRLQE…AGRLEEVRGQ (125 aa). Disordered stretches follow at residues 339–405, 419–483, and 495–827; these read SFPG…QTPR, LFGQ…LLWG, and VLIP…GGPQ. Residues 443 to 467 show a composition bias toward basic and acidic residues; the sequence is KDNKGVDPHEQDIRAEQPVEPHDPD. Positions 501–514 are enriched in pro residues; the sequence is DGPPPPANSPPPQA. Low complexity predominate over residues 532–559; the sequence is PGSWAPPSGAQPGAGAGPQEPTQTPPTM. A compositionally biased stretch (basic and acidic residues) spans 676-685; it reads SEEGKQEGRG. 2 stretches are compositionally biased toward polar residues: residues 688-697 and 710-727; these read DLSSEQSEQS and LPQQ…TPQA. Residues 736–759 show a composition bias toward low complexity; sequence PGKSAPPRGSPPRGAQPGAGAGPQ. The span at 783–810 shows a compositional bias: basic and acidic residues; that stretch reads HAEEQGPPHSREPRAESRLEDPGMDSRE. Residues 840-847, 888-892, and 946-949 each bind GTP; these read GDSNVGKT, DTAGQ, and NKMD. S-geranylgeranyl cysteine attachment occurs at residues Cys-1019 and Cys-1020.

It belongs to the small GTPase superfamily. Rab family.

It localises to the cell membrane. The protein is Ras-related protein Rab-44 (RAB44) of Homo sapiens (Human).